A 717-amino-acid polypeptide reads, in one-letter code: MFDITNLIELYESNDYVSGDYKHSQLQKAFLKLPITEVVMLVKSGFYPSKLSKKFYKPIAKFCVDKIYLFKPEYVSLKDLFTVIYTFDDLSKYKEIIRYYYYELSVSNSYQVYKKCKNILGYKDEYDNDIIEELSENDLVEKMVNFPGFRKIVYKKKILSIRILKEMYYKHKVLPINKGITPIREEDICFFIDALYDAHDDDDVLYLLLEINEQILDSDEVKETIIRKICKGENIDVLRYYVSHYLIDHAKLGVYYNIFFSERDIISEYGLTDESLKVICKYIDRYSSSIPSIIKLLLDNSNYTLLASVIDYIPEERLNENLYMQIVRHSNDNKPKIKSFKAEFLSECLMVMCYLRGYEDIVDFLIALDVETIVRNRINPFNDYTFTTDWFNKNTELVRLYISFYFIDPVMMRKLLFEYPLCETSTTVAIEELKKYRSSINNNYNIDYHEEFKIVDLPRSFNIPISEVVSTKEYNSIISFISDKSYKFKITSQLLKYNILQTIKVENLCYSHINNLHSFYFNITKPSGIIDNISRLIYQIGDLGRLLRHGFLSFTDNYFGKWIPSLNYSKILDHYQYNGPDYVLSWQIGKLDLKAFVKYKDFPKFFLTKYNIDFLLEKEVLLYYCIYSYLLLYILVGSVTYVEQENIYYFITNIINSFIQGLGIRNSIDSLSEEVVKELIIIQKLPENKRKLSSIRPVSLLNLCKRVCAFISRDGKK.

This sequence belongs to the poxviridae E2 protein family.

The polypeptide is Protein E2 homolog (Fowlpox virus (strain NVSL) (FPV)).